Here is a 164-residue protein sequence, read N- to C-terminus: Ribosome-binding factor A (164 aa).

The tract at residues 123 to 164 (ARDLGVPPSGEDDGDDEADDEDDDGGEEGPGAAAPPPADEGR) is disordered. The segment covering 132 to 149 (GEDDGDDEADDEDDDGGE) has biased composition (acidic residues). Residues 155-164 (AAPPPADEGR) are compositionally biased toward pro residues.

The protein belongs to the RbfA family. As to quaternary structure, monomer. Binds 30S ribosomal subunits, but not 50S ribosomal subunits or 70S ribosomes.

It is found in the cytoplasm. Functionally, one of several proteins that assist in the late maturation steps of the functional core of the 30S ribosomal subunit. Associates with free 30S ribosomal subunits (but not with 30S subunits that are part of 70S ribosomes or polysomes). Required for efficient processing of 16S rRNA. May interact with the 5'-terminal helix region of 16S rRNA. In Rhodospirillum rubrum (strain ATCC 11170 / ATH 1.1.1 / DSM 467 / LMG 4362 / NCIMB 8255 / S1), this protein is Ribosome-binding factor A.